The primary structure comprises 103 residues: Small ribosomal subunit protein uS10 (103 aa).

It belongs to the universal ribosomal protein uS10 family. As to quaternary structure, part of the 30S ribosomal subunit.

Involved in the binding of tRNA to the ribosomes. The polypeptide is Small ribosomal subunit protein uS10 (Saccharophagus degradans (strain 2-40 / ATCC 43961 / DSM 17024)).